A 336-amino-acid polypeptide reads, in one-letter code: tRNA N6-adenosine threonylcarbamoyltransferase (336 aa).

Fe cation is bound by residues His111 and His115. Residues 134-138 (LVSGG), Asp167, Gly180, and Asn270 contribute to the substrate site. Asp298 lines the Fe cation pocket.

Belongs to the KAE1 / TsaD family. Requires Fe(2+) as cofactor.

Its subcellular location is the cytoplasm. It carries out the reaction L-threonylcarbamoyladenylate + adenosine(37) in tRNA = N(6)-L-threonylcarbamoyladenosine(37) in tRNA + AMP + H(+). Required for the formation of a threonylcarbamoyl group on adenosine at position 37 (t(6)A37) in tRNAs that read codons beginning with adenine. Is involved in the transfer of the threonylcarbamoyl moiety of threonylcarbamoyl-AMP (TC-AMP) to the N6 group of A37, together with TsaE and TsaB. TsaD likely plays a direct catalytic role in this reaction. The sequence is that of tRNA N6-adenosine threonylcarbamoyltransferase from Acinetobacter baumannii (strain AB307-0294).